The sequence spans 1171 residues: MSSSSSDENETTIHSSSNPGSSGIYSQLKAGSSKRPSVRHDVSDAEDDEEPYEGFRKDMNMEVDERITTLLSSLHFEHKRDVVTADEDDNKLRELHENIFSLITTEPDFHRRRRLKKALPASNCIREQVYYLRRKPITPPDSYYHRLNAALHTIVKESFGEEYRKVATVLGLVEALAEVLILEVHAFGIPETNAVEHRNIRKLIANALTNLTYGQILSKRRLCSYDGFIRCVVRIIIESPNITQVYAGLIRNLSWNADSGMSEALQPTVHALSLAAVYAHTHRFDVTAILSALWNLAGHSVENKRTICETPNCLKVLANILSPDARFTTLVDSASGILKYVSQYLATNSSHLELRSLLITRMLTLLKSSSFTCVTNTLGAIAHLIAKDPHMQQLIRQDAAAVQQLNVLRNSNREDIRKAVKEVLNTLNQPCSHRYGDMSHSVGGASGMLSEPQLQMQTSHHGYHGTASPRLLSLRATRASPGKYIHPSQQQHMQVPAPDQRSSSLPRHFAVQRNGFMMAQSFNQQMDPHQQQQQQQQQMIFQMQQQQMMIQTDDQQMRYLNQQQQQQQQQHYQQQIQRNQNVEPVLPVDDDLDIPTSTVMGTRSNSERSLGSMNPGSVMTTGGWNSTLDTAANSSRALSPVSFSDIPASPTMCAQVFNLPVHPEDNQMTTPPNHPSTQNTTHYSSGSANTMTRSDGTTVPIDNLITPTYATLNVTNNAARKTSEDLESPDDILPGPSLEVEEEGDYAIITGAEQKSDDDLLTRSIQEEMPTSSSTPKLKVSPRLNGFFSPSQKTTSSPAWSHPDTSPILKQTQRPKHHEMTTDSDRLLMESIMSEMPRSRVISPRLASGGQQYLDPEPDRSSHSKNEEADRRDAIIASHEPSDQGMNVGRGSSPQQQQLHRMESLESQASSEDSFGLNGYQEEHNTSSSAAHTMRIDKDDVVDASLPMDCVDDEDYDYTDDHFDDNYEEDYEDSNATQFDEGIDPQLTIDCSMISSGSGSSLQKAETTAGSRDSGALATSTPIGSVSSLPGVRRAKKVSINGKTRLPVPKTNGSLVDRVRKPVIEASRPRLPPKPSLLKGKQYHEEDLIENQTRDDTIYVNAPIVEAEQERIYMNALKHSQGSPSVNGTPPKSAIVSPYNYQKPPFTERSNGEINEKNVTPNPKQMLVTIV.

Positions 1–54 (MSSSSSDENETTIHSSSNPGSSGIYSQLKAGSSKRPSVRHDVSDAEDDEEPYEG) are disordered. A required for interaction with bar-1 and hmp-2 region spans residues 1 to 481 (MSSSSSDENE…LSLRATRASP (481 aa)). Positions 15–26 (SSSNPGSSGIYS) are enriched in low complexity. An ARM repeat occupies 312–356 (NCLKVLANILSPDARFTTLVDSASGILKYVSQYLATNSSHLELRS). Disordered stretches follow at residues 587 to 617 (PVDD…NPGS), 662 to 699 (HPED…GTTV), 720 to 741 (RKTS…LEVE), 767 to 822 (EEMP…EMTT), 837 to 936 (PRSR…TMRI), and 995 to 1030 (SSGS…SSLP). Residues 591 to 1171 (DLDIPTSTVM…NPKQMLVTIV (581 aa)) are required for interaction with pry-1. Polar residues-rich tracts occupy residues 595-617 (PTST…NPGS) and 666-697 (NQMT…SDGT). A compositionally biased stretch (polar residues) spans 788–799 (FSPSQKTTSSPA). A compositionally biased stretch (basic and acidic residues) spans 857 to 874 (EPDRSSHSKNEEADRRDA). 2 stretches are compositionally biased toward polar residues: residues 890 to 913 (RGSS…SSED) and 1002 to 1028 (LQKA…SVSS).

The protein belongs to the adenomatous polyposis coli (APC) family. As to quaternary structure, interacts (via N-terminus) with bar-1 and hmp-2; the interaction with hmp-2 is relatively weak. Interacts (via C-terminus) with pry-1 (via N-terminus). Probably associates with bar-1, gsk-3, pry-1 in a complex.

It localises to the cell junction. It is found in the adherens junction. The protein resides in the cytoplasm. Its subcellular location is the nucleus. Its function is as follows. Has a role in endoderm cell specification and pharyngeal development. Required for the migration of epithelial cells, organization of the anterior seam cells and ceh-13 expression during embryo morphogenesis. Prevents hyperactivation of the Wnt signaling pathway during endoderm development, probably by preventing hmp-2 nuclear translocation. During larval development, apr-1 is required for expression of lin-39 in P3-8.p. Shown to negatively regulate Wnt signaling in vulval precursor cells. Has a role in cell division by establishing the polarity of the mother cell which forms the asymmetries of the daughter nuclei. Thought to regulate export of wrm-1 from the nucleus possibly as part of a complex involving pry-1. The sequence is that of APC-related protein 1 from Caenorhabditis briggsae.